A 389-amino-acid chain; its full sequence is Indole-3-acetate monooxygenase (389 aa).

This sequence belongs to the HpaH/HsaA monooxygenase family.

The catalysed reaction is (indol-3-yl)acetate + NADH + O2 + H(+) = 2-hydroxy-(1H-indol-3-yl)acetate + NAD(+) + H2O. It catalyses the reaction indole + NADH + O2 + H(+) = indoxyl + NAD(+) + H2O. In terms of biological role, involved in the degradation of the plant hormone indole-3-acetic acid (IAA). Catalyzes the first step of the pathway, the conversion of IAA to 2-hydroxy-IAA (2-OH-IAA). Can also convert indole to indoxyl, which spontaneously dimerizes in the presence of oxygen to form the blue pigment indigo. This Acinetobacter baumannii (strain ATCC 19606 / DSM 30007 / JCM 6841 / CCUG 19606 / CIP 70.34 / NBRC 109757 / NCIMB 12457 / NCTC 12156 / 81) protein is Indole-3-acetate monooxygenase.